We begin with the raw amino-acid sequence, 2168 residues long: Bromodomain adjacent to zinc finger domain protein 2B (2168 aa).

Disordered stretches follow at residues 1-29 (MESGERLPSSAASSTTPTSSSTPSVASVV), 140-348 (FAPP…KQPQ), 409-428 (LKAGNKNTSEESSLLTSELR), 459-479 (SNPKATSSSPAHPKQTLENNH), 528-698 (STPF…LHIA), 719-740 (GTSSSTLTSSPHSGTSKRRRVT), 841-872 (MEGRRGRPPNPDRQRAREESRMRRRKGRPPNV), and 1021-1043 (RKKAEEKERLKQEKRDEKRLNKE). The segment covering 8–29 (PSSAASSTTPTSSSTPSVASVV) has biased composition (low complexity). Polar residues-rich tracts occupy residues 146-163 (NHDSSSFHSRTSGKSNRN) and 171-193 (GSINGSNTSSVIGINTSVLSTTA). Low complexity-rich tracts occupy residues 194–204 (SSSMGQTKSTS) and 240–263 (ESSSNSDSDSGTSSDTSSEGISSS). Residues 264–291 (DSDDLEEDEEEEDQSIEESEDDDSDSES) show a composition bias toward acidic residues. A compositionally biased stretch (basic and acidic residues) spans 307 to 325 (SDPKADGQKATEKAQEKRI). Residues 335–348 (SQTHSFQSQQKQPQ) are compositionally biased toward low complexity. Polar residues-rich tracts occupy residues 461-479 (PKATSSSPAHPKQTLENNH) and 528-551 (STPFSSPVNLSTSGRRTPGNQTPV). Over residues 592–605 (RGTDSDIPSSKDSE) the composition is skewed to basic and acidic residues. Residues 606–663 (DSNEDEEEDDEEEDEEDDEDDESDDSQSESDSNSESDTEGSEEEDDDDKDQDESDSDT) show a composition bias toward acidic residues. The span at 670 to 693 (MKLNKTTSSVKSPSMSLTGHSTPR) shows a compositional bias: polar residues. Residues 720–732 (TSSSTLTSSPHSG) show a composition bias toward low complexity. One can recognise an MBD domain in the interval 739–810 (VTDERELRIP…DNFSFSAKIR (72 aa)). A compositionally biased stretch (basic and acidic residues) spans 841-861 (MEGRRGRPPNPDRQRAREESR). Positions 883–1061 (AKLLRKLQAQ…ELEMAKELKK (179 aa)) form a coiled coil. The region spanning 1087–1152 (GSTFSDCLMV…LSAAVCDPGL (66 aa)) is the DDT domain. The disordered stretch occupies residues 1265–1341 (KRDTSGGIDL…CEDEDEGDQA (77 aa)). Over residues 1297–1321 (SDYDDDDDDDSDDQGDEDDEDEEDK) the composition is skewed to acidic residues. A compositionally biased stretch (basic and acidic residues) spans 1322-1331 (EDKKGKKTDI). A coiled-coil region spans residues 1334–1375 (DEDEGDQAASVEELEKQIEKLSKQQSQYRRKLFDASHSLRSV). Residue K1425 forms a Glycyl lysine isopeptide (Lys-Gly) (interchain with G-Cter in SUMO2) linkage. Position 1462 is an N6-acetyllysine (K1462). 2 positions are modified to phosphoserine: S1465 and S1467. Positions 1503–1533 (SGKHSLGSVQSTATQSNVEKADSNNLFNTGS) are enriched in polar residues. Disordered regions lie at residues 1503–1542 (SGKHSLGSVQSTATQSNVEKADSNNLFNTGSSGPGKFYSP), 1582–1607 (SLVTPQSQPPSKSPSPTPAPLGSSAQ), and 1670–1694 (TSNVASSKSESPVPQNEKATSAQPA). Residues 1588–1600 (SQPPSKSPSPTPA) are compositionally biased toward pro residues. A compositionally biased stretch (polar residues) spans 1670 to 1692 (TSNVASSKSESPVPQNEKATSAQ). At S1680 the chain carries Phosphoserine. A PHD-type zinc finger spans residues 1931-1981 (KVYCQICRKGDNEELLLLCDGCDKGCHTYCHRPKITTIPDGDWFCPACIAK). Positions 1998-2040 (KTNESKKGKKVTLTGDTEDEDSASTSSSLKRGNKDLKKRKMEE) are disordered. T2014 is subject to Phosphothreonine. S2019 bears the Phosphoserine mark. Residues 2029–2040 (GNKDLKKRKMEE) show a composition bias toward basic and acidic residues. The Bromo domain maps to 2060 to 2164 (RDDSKDLALC…KYFEKKWTDT (105 aa)).

The protein belongs to the WAL family. As to quaternary structure, component of the BRF-1 ISWI chromatin remodeling complex, at least composed of SMARCA1 and BAZ2B, which regulates the spacing of histone octamers on the DNA template to facilitate access to DNA. Within the BRF-1 ISWI chromatin remodeling complex interacts with SMARCA1; the interaction is direct. Component of the BRF-5 ISWI chromatin remodeling complex, at least composed of SMARCA5/SNF2H and BAZ2B, which regulates the spacing of histone octamers on the DNA template to facilitate access to DNA. Within the BRF-5 ISWI chromatin remodeling complex interacts with SMARCA5/SNF2H; the interaction is direct. Interacts with acetylated lysine residues on histone H1.4, H2A, H2B, H3 and H4 (in vitro). Interacts with EHMT1. In terms of tissue distribution, expressed at varying levels in several tissues, whereas a smaller transcript was expressed specifically in testis.

The protein resides in the nucleus. Regulatory subunit of the ATP-dependent BRF-1 and BRF-5 ISWI chromatin remodeling complexes, which form ordered nucleosome arrays on chromatin and facilitate access to DNA during DNA-templated processes such as DNA replication, transcription, and repair. Both complexes regulate the spacing of nucleosomes along the chromatin and have the ability to slide mononucleosomes to the center of a DNA template. The BRF-1 ISWI chromatin remodeling complex has a lower ATP hydrolysis rate than the BRF-5 ISWI chromatin remodeling complex. Chromatin reader protein, which may play a role in transcriptional regulation via interaction with ISWI. Involved in positively modulating the rate of age-related behavioral deterioration. Represses the expression of mitochondrial function-related genes, perhaps by occupying their promoter regions, working in concert with histone methyltransferase EHMT1. This is Bromodomain adjacent to zinc finger domain protein 2B (BAZ2B) from Homo sapiens (Human).